Reading from the N-terminus, the 418-residue chain is 3-isopropylmalate dehydratase large subunit 1 (418 aa).

[4Fe-4S] cluster is bound by residues C298, C358, and C361.

It belongs to the aconitase/IPM isomerase family. LeuC type 2 subfamily. In terms of assembly, heterodimer of LeuC and LeuD. Requires [4Fe-4S] cluster as cofactor.

It catalyses the reaction (2R,3S)-3-isopropylmalate = (2S)-2-isopropylmalate. Its pathway is amino-acid biosynthesis; L-leucine biosynthesis; L-leucine from 3-methyl-2-oxobutanoate: step 2/4. Its function is as follows. Catalyzes the isomerization between 2-isopropylmalate and 3-isopropylmalate, via the formation of 2-isopropylmaleate. This is 3-isopropylmalate dehydratase large subunit 1 from Archaeoglobus fulgidus (strain ATCC 49558 / DSM 4304 / JCM 9628 / NBRC 100126 / VC-16).